The sequence spans 1203 residues: Regulator of telomere elongation helicase 1 (1203 aa).

The Helicase ATP-binding domain maps to asparagine 7 to glutamine 296. Residue serine 42–threonine 49 participates in ATP binding. [4Fe-4S] cluster contacts are provided by cysteine 145, cysteine 163, cysteine 172, and cysteine 207. The short motif at lysine 151 to valine 167 is the Nuclear localization signal element. The short motif at aspartate 250–histidine 253 is the DEAH box element. Residues glutamine 871–lysine 877 carry the Nuclear localization signal motif. Disordered stretches follow at residues glutamine 998–glycine 1020 and threonine 1120–glutamine 1203. The span at histidine 1004–glycine 1020 shows a compositional bias: polar residues. The segment covering lysine 1123–serine 1134 has biased composition (basic and acidic residues). The short motif at glutamine 1160–phenylalanine 1167 is the PIP-box element. Positions glutamine 1169–threonine 1181 are enriched in basic and acidic residues.

It belongs to the helicase family. RAD3/XPD subfamily. In terms of assembly, interacts with TERF1. Interacts (via PIP-box) with PCNA; the interaction is direct and essential for suppressing telomere fragility. Interacts with MMS19; the interaction mediates the association of RTEL1 with the cytosolic iron-sulfur protein assembly (CIA) complex. In terms of tissue distribution, widely expressed. Expressed in spleen, thymus, Peyer patches, kidney, and intestine. Not expressed in brain, heart, lung, skeletal muscles, skin and white fat. In the adult gonad, it is highly expressed in the testis, mainly in the spermatogonia and meiotic spermatocytes.

The protein localises to the nucleus. The enzyme catalyses ATP + H2O = ADP + phosphate + H(+). Functionally, a probable ATP-dependent DNA helicase implicated in telomere-length regulation, DNA repair and the maintenance of genomic stability. Acts as an anti-recombinase to counteract toxic recombination and limit crossover during meiosis. Regulates meiotic recombination and crossover homeostasis by physically dissociating strand invasion events and thereby promotes noncrossover repair by meiotic synthesis dependent strand annealing (SDSA) as well as disassembly of D loop recombination intermediates. Also disassembles T loops and prevents telomere fragility by counteracting telomeric G4-DNA structures, which together ensure the dynamics and stability of the telomere. The sequence is that of Regulator of telomere elongation helicase 1 from Mus musculus (Mouse).